A 407-amino-acid chain; its full sequence is Histone-lysine N-methyltransferase SUV39H2 (407 aa).

One can recognise a Chromo domain in the interval 43–101 (YEVEYLCDYKVEEGKEYYLVKWKGWPESSNTWEPQKNLKCPKLLENFLSDKDEYLSRMK). In terms of domain architecture, Pre-SET spans 185–243 (TGCECSDCPAEKCCPKEAGFILAYNKQKKLKIQPGLPIYECNSFCRCGPDCPNRIVQKG). The Zn(2+) site is built by C187, C189, C192, C197, C198, C225, C229, C231, and C235. Residues 246-369 (YSLCIFRTNN…AGEELTFDYQ (124 aa)) enclose the SET domain. S-adenosyl-L-methionine-binding positions include 257–259 (RGW), Y300, and 326–327 (NH). Positions 329, 395, 397, and 402 each coordinate Zn(2+). The region spanning 391–407 (IRTVCKCGAVCCRGYLN) is the Post-SET domain.

The protein belongs to the class V-like SAM-binding methyltransferase superfamily. Histone-lysine methyltransferase family. Suvar3-9 subfamily.

Its subcellular location is the nucleus. It is found in the chromosome. The protein localises to the centromere. The catalysed reaction is L-lysyl(9)-[histone H3] + 3 S-adenosyl-L-methionine = N(6),N(6),N(6)-trimethyl-L-lysyl(9)-[histone H3] + 3 S-adenosyl-L-homocysteine + 3 H(+). In terms of biological role, histone methyltransferase that specifically trimethylates 'Lys-9' of histone H3 using monomethylated H3 'Lys-9' as substrate. H3 'Lys-9' trimethylation represents a specific tag for epigenetic transcriptional repression by recruiting HP1 (CBX1, CBX3 and/or CBX5) proteins to methylated histones. Mainly functions in heterochromatin regions, thereby playing a central role in the establishment of constitutive heterochromatin at pericentric and telomere regions. H3 'Lys-9' trimethylation is also required to direct DNA methylation at pericentric repeats. SUV39H1 is targeted to histone H3 via its interaction with RB1 and is involved in many processes. The chain is Histone-lysine N-methyltransferase SUV39H2 (SUV39H2) from Gallus gallus (Chicken).